We begin with the raw amino-acid sequence, 930 residues long: Urea transporter 2 (930 aa).

Residues 1-11 (MSDHHPLKEMS) show a composition bias toward basic and acidic residues. A disordered region spans residues 1–90 (MSDHHPLKEM…KRRESEVSRR (90 aa)). Low complexity-rich tracts occupy residues 12–25 (DSNS…PLSS) and 32–43 (SELSSPTWPSSS). Residues 56–89 (PEEKDLRSSDEDSHIVKIEKPNERNKRRESEVSR) show a composition bias toward basic and acidic residues. The next 8 membrane-spanning stretches (helical) occupy residues 145-165 (ISGL…TIAG), 185-205 (AIAS…MAVF), 213-233 (WWLL…SSAL), 242-262 (LPVF…ATGH), 280-300 (NITW…VGVG), 311-331 (GGVI…HAAI), 350-372 (IYLG…MFYA), and 401-421 (VVGV…FLLL). Residues 452 to 479 (SEEEKSPNGGSGEQSHGSGQWKAEESSE) form a disordered region. Ser-487 carries the phosphoserine modification. The next 4 helical transmembrane spans lie at 610 to 630 (GILI…SGCL), 648 to 668 (AIAA…MAVF), 676 to 696 (WWLL…SSAL), and 705 to 725 (LPVF…ATGH). Residue Asn-743 is glycosylated (N-linked (GlcNAc...) asparagine). The next 4 membrane-spanning stretches (helical) occupy residues 774-794 (GGIF…HAAI), 813-833 (IYFG…GGMF), 842-862 (LLAI…ANML), and 864-884 (VFGL…FLLL).

This sequence belongs to the urea transporter family. As to expression, highly expressed in kidney medulla (at protein level). Also detected in testes, heart, brain and liver (at protein level). In the kidney, present in thin descending limbs of the loop of Henle and in the middle and terminal inner medullary collecting ducts. Expressed in the kidney medulla. In terms of tissue distribution, expressed in the peritubular myoid cells forming the outermost layer of the seminiferous tubules within the testes and is not detected in kidney. Expression levels are coordinated with the stage of testes development and increase 15 days postpartum, commensurate with the start of seminiferous tubule fluid movement.

It is found in the apical cell membrane. It localises to the basolateral cell membrane. The catalysed reaction is urea(in) = urea(out). Its activity is regulated as follows. Inhibited by phloretin. Activated by forskolin, 3-isobutyl-1-methylxanthine (IBMX) and cAMP. Inhibited by phloretin. With respect to regulation, inhibited by phloretin. Activated by forskolin, 3-isobutyl-1-methylxanthine (IBMX) and cAMP. In terms of biological role, mediates the transport of urea driven by a concentration gradient across the cell membrane of the renal inner medullary collecting duct which is critical to the urinary concentrating mechanism. Its function is as follows. Mediates the transport of urea driven by a concentration gradient across the cell membrane. Implicated in the urea movement across the blood-testis barrier and does not translocate water. In Mus musculus (Mouse), this protein is Urea transporter 2 (Slc14a2).